Reading from the N-terminus, the 678-residue chain is MTKNLLVELGLEELPAYVVTPSEKQLGEKMAAFLKENRLSFEAIQTFSTPRRLAVRVTGLSDKQSDLTEDFKGPAKKIALDSDGNFTKAAQGFVRGKGLTVEDIEFREIKGEEYVYVTKEEVGQSVEAIVPGVVDVLKSLTFPVSMHWAGNSFEYIRPVHTLTVLLDEQEFDLDFLDIKGSRVSRGHRFLGKETKIQSALSYEEDLRKQFVIADPCEREQMIVDQIKEIEAKHGVRIEIDADLLNEVLNLVEYPTAFMGSFDAKYLEVPEEVLVTSMKEHQRYFVVRDQDGKLLPNFISVRNGNAERLKNVIKGNEKVLVARLEDGEFFWREDQKLVISDLVEKLNNVTFHEKIGSLREHMIRTGQITVLLAEKAGLSVDETVDLARAAAIYKFDLLTGMVGEFDELQGIMGEKYTLLAGETPAVAAAIREHYMPTSAEGELPESKVGAVLAIADKLDTILSFFSVGLIPSGSNDPYALRRATQGVVRILDAFGWHIAMDELIDSLYALKFDSLTYENKAEVMDFIKARVDKMMGSTPKDIKEAVLAGSNFVVADMLEAASALVEVSKEEDFKPSVESLSRAFNLAEKAEGVATVDSALFENDQEKALAEAVETLILSGPASQQLKQLFALSPVIDAFFENTMVMAEDQAVRQNRLAILSQLTKKAAKFACFNQINTK.

Belongs to the class-II aminoacyl-tRNA synthetase family. Tetramer of two alpha and two beta subunits.

It is found in the cytoplasm. The enzyme catalyses tRNA(Gly) + glycine + ATP = glycyl-tRNA(Gly) + AMP + diphosphate. In Streptococcus pneumoniae (strain Hungary19A-6), this protein is Glycine--tRNA ligase beta subunit.